The chain runs to 71 residues: Small ribosomal subunit protein bS18 (71 aa).

The protein belongs to the bacterial ribosomal protein bS18 family. Part of the 30S ribosomal subunit. Forms a tight heterodimer with protein bS6.

Binds as a heterodimer with protein bS6 to the central domain of the 16S rRNA, where it helps stabilize the platform of the 30S subunit. The protein is Small ribosomal subunit protein bS18 of Acaryochloris marina (strain MBIC 11017).